We begin with the raw amino-acid sequence, 64 residues long: Large ribosomal subunit protein bL33 (64 aa).

It belongs to the bacterial ribosomal protein bL33 family.

This is Large ribosomal subunit protein bL33 from Synechococcus elongatus (strain ATCC 33912 / PCC 7942 / FACHB-805) (Anacystis nidulans R2).